The following is a 325-amino-acid chain: Formimidoylglutamase (325 aa).

6 residues coordinate Mn(2+): H125, D155, H157, D159, C246, and D248.

The protein belongs to the arginase family. Requires Mn(2+) as cofactor.

The catalysed reaction is N-formimidoyl-L-glutamate + H2O = formamide + L-glutamate. It functions in the pathway amino-acid degradation; L-histidine degradation into L-glutamate; L-glutamate from N-formimidoyl-L-glutamate (hydrolase route): step 1/1. Catalyzes the conversion of N-formimidoyl-L-glutamate to L-glutamate and formamide. This Ralstonia nicotianae (strain ATCC BAA-1114 / GMI1000) (Ralstonia solanacearum) protein is Formimidoylglutamase.